A 493-amino-acid polypeptide reads, in one-letter code: Extracellular tyrosine-protein kinase PKDCC (493 aa).

The N-terminal stretch at M1–P32 is a signal peptide. Positions P28 to P128 are disordered. Residues S30–G46 are compositionally biased toward pro residues. A compositionally biased stretch (basic and acidic residues) spans G52–R69. Composition is skewed to pro residues over residues P95–A105 and G114–G127. The N-linked (GlcNAc...) asparagine glycan is linked to N137. In terms of domain architecture, Protein kinase spans V138 to G493. ATP contacts are provided by residues M144 to V152 and K166. Position 148 is a phosphotyrosine (Y148). Position 177 is a phosphoserine (S177). The Proton acceptor role is filled by D278. N-linked (GlcNAc...) asparagine glycosylation is found at N320, N369, N400, N460, and N484.

It belongs to the protein kinase superfamily. Post-translationally, N-glycosylated. In terms of processing, phosphorylated on tyrosines; probably via autophosphorylation. In terms of tissue distribution, highly expressed in platelets.

The protein resides in the secreted. The protein localises to the golgi apparatus. It catalyses the reaction L-tyrosyl-[protein] + ATP = O-phospho-L-tyrosyl-[protein] + ADP + H(+). In terms of biological role, secreted tyrosine-protein kinase that mediates phosphorylation of extracellular proteins and endogenous proteins in the secretory pathway, which is essential for patterning at organogenesis stages. Mediates phosphorylation of MMP1, MMP13, MMP14, MMP19 and ERP29. Probably plays a role in platelets: rapidly and quantitatively secreted from platelets in response to stimulation of platelet degranulation. May also have serine/threonine protein kinase activity. Required for longitudinal bone growth through regulation of chondrocyte differentiation. May be indirectly involved in protein transport from the Golgi apparatus to the plasma membrane. This is Extracellular tyrosine-protein kinase PKDCC from Homo sapiens (Human).